A 209-amino-acid polypeptide reads, in one-letter code: D-aminoacyl-tRNA deacylase 1 (209 aa).

Mg(2+) is bound by residues valine 4, glutamine 6, and cysteine 28. The Gly-cisPro motif, important for rejection of L-amino acids signature appears at glycine 139–proline 140. Positions threonine 142–proline 209 are disordered. 2 stretches are compositionally biased toward basic and acidic residues: residues glutamine 159–lysine 170 and serine 181–serine 194. 3 positions are modified to phosphoserine: serine 197, serine 204, and serine 205.

It belongs to the DTD family. In terms of assembly, homodimer. Interacts with CDC45 and TOPBP1. Post-translationally, preferentially phosphorylated in cells arrested early in S phase. Phosphorylation in the C-terminus weakens the interaction with CDC45.

It localises to the nucleus. The protein resides in the cytoplasm. It carries out the reaction glycyl-tRNA(Ala) + H2O = tRNA(Ala) + glycine + H(+). It catalyses the reaction a D-aminoacyl-tRNA + H2O = a tRNA + a D-alpha-amino acid + H(+). Its function is as follows. An aminoacyl-tRNA editing enzyme that deacylates mischarged D-aminoacyl-tRNAs. Also deacylates mischarged glycyl-tRNA(Ala), protecting cells against glycine mischarging by AlaRS. Acts via tRNA-based rather than protein-based catalysis; rejects L-amino acids rather than detecting D-amino acids in the active site. By recycling D-aminoacyl-tRNA to D-amino acids and free tRNA molecules, this enzyme counteracts the toxicity associated with the formation of D-aminoacyl-tRNA entities in vivo and helps enforce protein L-homochirality. ATPase involved in DNA replication, may facilitate loading of CDC45 onto pre-replication complexes. This chain is D-aminoacyl-tRNA deacylase 1 (DTD1), found in Bos taurus (Bovine).